The chain runs to 439 residues: Probable threonine protease PRSS50 (439 aa).

Disordered stretches follow at residues 1–22 (MEPW…VPGA) and 48–130 (ERIR…TMAP). A signal peptide spans 1–47 (MEPWCGAEVRGQGPQGPRVPGASRSRSRALLLLLLLLLLLLPRRPAG). The segment covering 9–21 (VRGQGPQGPRVPG) has biased composition (low complexity). Over 48 to 415 (ERIRPRRPPR…WIWDRLSGEP (368 aa)) the chain is Extracellular. A compositionally biased stretch (basic residues) spans 51 to 61 (RPRRPPRHAHP). The span at 112–127 (QAQTNQTTTAPPNSQT) shows a compositional bias: low complexity. N-linked (GlcNAc...) asparagine glycans are attached at residues asparagine 116 and asparagine 187. In terms of domain architecture, Peptidase S1 spans 157 to 412 (FCGSSHEPDP…YRPWIWDRLS (256 aa)). Cysteine 192 and cysteine 208 form a disulfide bridge. Histidine 207 acts as the Charge relay system in catalysis. Asparagine 226 is a glycosylation site (N-linked (GlcNAc...) asparagine). The active-site Charge relay system is the aspartate 260. Cystine bridges form between cysteine 294–cysteine 370, cysteine 327–cysteine 350, and cysteine 360–cysteine 388. Threonine 364 serves as the catalytic Charge relay system. Residues 416-436 (LALPAPSRTLLLAFLLLLILL) form a helical membrane-spanning segment. The Cytoplasmic segment spans residues 437–439 (GTL).

Belongs to the peptidase S1 family.

Its subcellular location is the membrane. May be involved in proteolysis through its threonine endopeptidase activity. This Mus musculus (Mouse) protein is Probable threonine protease PRSS50 (Prss50).